The primary structure comprises 105 residues: Nitrogen fixation nifHD region GlnB-like protein 1 (105 aa).

It belongs to the P(II) protein family.

Could be involved in the regulation of nitrogen fixation. This Methanothermobacter marburgensis (strain ATCC BAA-927 / DSM 2133 / JCM 14651 / NBRC 100331 / OCM 82 / Marburg) (Methanobacterium thermoautotrophicum) protein is Nitrogen fixation nifHD region GlnB-like protein 1 (glnBA).